The sequence spans 331 residues: Ketol-acid reductoisomerase (NADP(+)) (331 aa).

Positions 2–182 constitute a KARI N-terminal Rossmann domain; it reads ARMYYDTDAN…GGTRAGILET (181 aa). NADP(+) contacts are provided by residues 25 to 28, S51, S53, and 83 to 86; these read YGSQ and DEVQ. Residue H108 is part of the active site. An NADP(+)-binding site is contributed by G134. A KARI C-terminal knotted domain is found at 183-328; it reads TFREETETDL…KDLRAMFSWL (146 aa). Mg(2+) contacts are provided by D191, E195, E227, and E231. S252 is a binding site for substrate.

This sequence belongs to the ketol-acid reductoisomerase family. It depends on Mg(2+) as a cofactor.

It catalyses the reaction (2R)-2,3-dihydroxy-3-methylbutanoate + NADP(+) = (2S)-2-acetolactate + NADPH + H(+). The enzyme catalyses (2R,3R)-2,3-dihydroxy-3-methylpentanoate + NADP(+) = (S)-2-ethyl-2-hydroxy-3-oxobutanoate + NADPH + H(+). It participates in amino-acid biosynthesis; L-isoleucine biosynthesis; L-isoleucine from 2-oxobutanoate: step 2/4. The protein operates within amino-acid biosynthesis; L-valine biosynthesis; L-valine from pyruvate: step 2/4. Involved in the biosynthesis of branched-chain amino acids (BCAA). Catalyzes an alkyl-migration followed by a ketol-acid reduction of (S)-2-acetolactate (S2AL) to yield (R)-2,3-dihydroxy-isovalerate. In the isomerase reaction, S2AL is rearranged via a Mg-dependent methyl migration to produce 3-hydroxy-3-methyl-2-ketobutyrate (HMKB). In the reductase reaction, this 2-ketoacid undergoes a metal-dependent reduction by NADPH to yield (R)-2,3-dihydroxy-isovalerate. The polypeptide is Ketol-acid reductoisomerase (NADP(+)) (Rippkaea orientalis (strain PCC 8801 / RF-1) (Cyanothece sp. (strain PCC 8801))).